A 520-amino-acid polypeptide reads, in one-letter code: GMP synthase [glutamine-hydrolyzing] (520 aa).

In terms of domain architecture, Glutamine amidotransferase type-1 spans 9–202 (TILIIDFGSQ…VHRIVGVKPG (194 aa)). The active-site Nucleophile is the C86. Residues H176 and E178 contribute to the active site. Positions 203–395 (WTMGAYREQA…LGLPDSFIGR (193 aa)) constitute a GMPS ATP-PPase domain. 230–236 (SGGVDSS) contributes to the ATP binding site.

Homodimer.

The enzyme catalyses XMP + L-glutamine + ATP + H2O = GMP + L-glutamate + AMP + diphosphate + 2 H(+). Its pathway is purine metabolism; GMP biosynthesis; GMP from XMP (L-Gln route): step 1/1. Functionally, catalyzes the synthesis of GMP from XMP. The sequence is that of GMP synthase [glutamine-hydrolyzing] from Brucella canis (strain ATCC 23365 / NCTC 10854 / RM-666).